Consider the following 129-residue polypeptide: Glycine cleavage system H protein (129 aa).

Residues 24-106 (IAVIGITAYA…YGDGWLIKVR (83 aa)) form the Lipoyl-binding domain. N6-lipoyllysine is present on Lys65.

This sequence belongs to the GcvH family. In terms of assembly, the glycine cleavage system is composed of four proteins: P, T, L and H. It depends on (R)-lipoate as a cofactor.

Its function is as follows. The glycine cleavage system catalyzes the degradation of glycine. The H protein shuttles the methylamine group of glycine from the P protein to the T protein. The polypeptide is Glycine cleavage system H protein (Synechococcus sp. (strain JA-2-3B'a(2-13)) (Cyanobacteria bacterium Yellowstone B-Prime)).